The primary structure comprises 152 residues: Transcriptional regulator MraZ (152 aa).

SpoVT-AbrB domains follow at residues 5 to 52 (ATLV…PLPE) and 81 to 124 (ASEC…DETT).

Belongs to the MraZ family. Dodecamer.

Its subcellular location is the cytoplasm. It is found in the nucleoid. Functionally, negatively regulates its own expression and that of the subsequent genes in the proximal part of the division and cell wall (dcw) gene cluster. Acts by binding directly to DNA. May also regulate the expression of genes outside the dcw cluster. The polypeptide is Transcriptional regulator MraZ (Escherichia coli (strain K12)).